The following is a 427-amino-acid chain: Trigger factor (427 aa).

The region spanning 163 to 248 is the PPIase FKBP-type domain; it reads GDTVVIDFVG…VHEVKAKEVP (86 aa).

It belongs to the FKBP-type PPIase family. Tig subfamily.

The protein resides in the cytoplasm. It carries out the reaction [protein]-peptidylproline (omega=180) = [protein]-peptidylproline (omega=0). Involved in protein export. Acts as a chaperone by maintaining the newly synthesized protein in an open conformation. Functions as a peptidyl-prolyl cis-trans isomerase. The chain is Trigger factor from Streptococcus equi subsp. zooepidemicus (strain H70).